A 124-amino-acid chain; its full sequence is UPF0231 protein Sputcn32_0682 (124 aa).

The protein belongs to the UPF0231 family.

This Shewanella putrefaciens (strain CN-32 / ATCC BAA-453) protein is UPF0231 protein Sputcn32_0682.